We begin with the raw amino-acid sequence, 244 residues long: Thaumatin-like protein 1 (244 aa).

An N-terminal signal peptide occupies residues 1–22; the sequence is MKFEALIGLVLVFLSEHAGVYS. 8 cysteine pairs are disulfide-bonded: Cys31–Cys243, Cys79–Cys89, Cys94–Cys101, Cys149–Cys232, Cys154–Cys215, Cys162–Cys178, Cys182–Cys191, and Cys192–Cys202. N-linked (GlcNAc...) asparagine glycosylation occurs at Asn150.

It belongs to the thaumatin family. N-glycosylated. In terms of tissue distribution, style.

It localises to the secreted. In Pyrus pyrifolia (Chinese pear), this protein is Thaumatin-like protein 1 (TL1).